A 245-amino-acid chain; its full sequence is Thiopurine S-methyltransferase (245 aa).

S-adenosyl-L-methionine is bound at residue 29–40 (WREKWVDGKIGF). F40 is a binding site for substrate. K58 is modified (N6-acetyllysine). S-adenosyl-L-methionine contacts are provided by L69, E90, and R152.

This sequence belongs to the class I-like SAM-binding methyltransferase superfamily. TPMT family. In terms of assembly, monomer.

The protein localises to the cytoplasm. It catalyses the reaction S-adenosyl-L-methionine + a thiopurine = S-adenosyl-L-homocysteine + a thiopurine S-methylether.. The polypeptide is Thiopurine S-methyltransferase (TPMT) (Lynx rufus (Bobcat)).